Reading from the N-terminus, the 100-residue chain is Large ribosomal subunit protein bL28 (100 aa).

This sequence belongs to the bacterial ribosomal protein bL28 family.

The chain is Large ribosomal subunit protein bL28 from Ehrlichia chaffeensis (strain ATCC CRL-10679 / Arkansas).